The primary structure comprises 331 residues: XylDLEGF operon transcriptional activator 3 (331 aa).

One can recognise an HTH araC/xylS-type domain in the interval 214–315 (ERVVQFIEDN…GELPSDTLRR (102 aa)). 2 consecutive DNA-binding regions (H-T-H motif) follow at residues 231 to 252 (ERLA…EKHA) and 282 to 305 (VTEM…RSTF).

It localises to the cytoplasm. In terms of biological role, regulatory protein of the TOL plasmid xyl operons. XylS activates the xylXYZLTEGFJQKIH operon required for the degradation of toluene, m-xylene and p-xylene. This Pseudomonas putida (Arthrobacter siderocapsulatus) protein is XylDLEGF operon transcriptional activator 3 (xylS3).